The primary structure comprises 288 residues: Formamidopyrimidine-DNA glycosylase (288 aa).

Residue P2 is the Schiff-base intermediate with DNA of the active site. Catalysis depends on E3, which acts as the Proton donor. K58 acts as the Proton donor; for beta-elimination activity in catalysis. Residues H101, R124, and R169 each coordinate DNA. The segment at 254–288 (LVYDRAGLPCRVCGTPIRQIVQGQRSTFYCPACQR) adopts an FPG-type zinc-finger fold. The active-site Proton donor; for delta-elimination activity is the R278.

The protein belongs to the FPG family. In terms of assembly, monomer. Zn(2+) is required as a cofactor.

The catalysed reaction is Hydrolysis of DNA containing ring-opened 7-methylguanine residues, releasing 2,6-diamino-4-hydroxy-5-(N-methyl)formamidopyrimidine.. It carries out the reaction 2'-deoxyribonucleotide-(2'-deoxyribose 5'-phosphate)-2'-deoxyribonucleotide-DNA = a 3'-end 2'-deoxyribonucleotide-(2,3-dehydro-2,3-deoxyribose 5'-phosphate)-DNA + a 5'-end 5'-phospho-2'-deoxyribonucleoside-DNA + H(+). Functionally, involved in base excision repair of DNA damaged by oxidation or by mutagenic agents. Acts as a DNA glycosylase that recognizes and removes damaged bases. Has a preference for oxidized purines, such as 7,8-dihydro-8-oxoguanine (8-oxoG). Has AP (apurinic/apyrimidinic) lyase activity and introduces nicks in the DNA strand. Cleaves the DNA backbone by beta-delta elimination to generate a single-strand break at the site of the removed base with both 3'- and 5'-phosphates. This chain is Formamidopyrimidine-DNA glycosylase, found in Ralstonia nicotianae (strain ATCC BAA-1114 / GMI1000) (Ralstonia solanacearum).